A 655-amino-acid chain; its full sequence is Probable alpha-galactosidase D (655 aa).

Residues 1-16 (MLPKIFYLSLLPAALG) form the signal peptide. N47 and N91 each carry an N-linked (GlcNAc...) asparagine glycan. C124 and C155 are oxidised to a cystine. Catalysis depends on D153, which acts as the Nucleophile. N180 and N189 each carry an N-linked (GlcNAc...) asparagine glycan. Substrate is bound at residue 198-202 (EWGID). The Proton donor role is filled by D220. Residues N349, N436, N458, N503, N537, N541, and N580 are each glycosylated (N-linked (GlcNAc...) asparagine).

This sequence belongs to the glycosyl hydrolase 27 family.

The protein localises to the secreted. It catalyses the reaction Hydrolysis of terminal, non-reducing alpha-D-galactose residues in alpha-D-galactosides, including galactose oligosaccharides, galactomannans and galactolipids.. Functionally, hydrolyzes a variety of simple alpha-D-galactoside as well as more complex molecules such as oligosaccharides and polysaccharides. This Aspergillus flavus (strain ATCC 200026 / FGSC A1120 / IAM 13836 / NRRL 3357 / JCM 12722 / SRRC 167) protein is Probable alpha-galactosidase D (aglD).